A 514-amino-acid polypeptide reads, in one-letter code: Beta-galactoside alpha-2,6-sialyltransferase 2 (514 aa).

Residues 1–10 (MKSSLKQWRR) are Cytoplasmic-facing. Residues 11 to 31 (LALGLILVWALLFLALLSYFM) traverse the membrane as a helical; Signal-anchor for type II membrane protein segment. Over 32-514 (ESRVDDPHAA…PGFNKVHCEP (483 aa)) the chain is Lumenal. Residues 70–92 (ATSSAPSTSSNTQQEQSQEENPS) are compositionally biased toward low complexity. The interval 70–183 (ATSSAPSTSS…TKRVARHGSS (114 aa)) is disordered. The segment covering 119-132 (FGTQDVGSRSTGVS) has biased composition (polar residues). Acidic residues predominate over residues 145-166 (PQEDEDEEEEVIGGEEEDEEGG). 3 cysteine pairs are disulfide-bonded: C246/C512, C289/C441, and C459/C470. 3 N-linked (GlcNAc...) asparagine glycosylation sites follow: N330, N350, and N357.

The protein belongs to the glycosyltransferase 29 family.

The protein localises to the golgi apparatus. The protein resides in the golgi stack membrane. It carries out the reaction a beta-D-galactoside + CMP-N-acetyl-beta-neuraminate = an N-acetyl-alpha-neuraminyl-(2-&gt;6)-beta-D-galactosyl derivative + CMP + H(+). Transfers sialic acid from the donor of substrate CMP-sialic acid to galactose containing acceptor substrates. This is Beta-galactoside alpha-2,6-sialyltransferase 2 (st6gal2) from Danio rerio (Zebrafish).